The chain runs to 356 residues: Holliday junction branch migration complex subunit RuvB (356 aa).

A large ATPase domain (RuvB-L) region spans residues 4–191; sequence TDKLATEQRI…FGIVARLEFY (188 aa). ATP contacts are provided by residues Leu30, Arg31, Gly72, Lys75, Thr76, Thr77, 138–140, Arg181, Tyr191, and Arg228; that span reads EDY. Thr76 contributes to the Mg(2+) binding site. The tract at residues 192 to 262 is small ATPAse domain (RuvB-S); sequence DAEQLSRIVR…VADAALAMLD (71 aa). Positions 265 to 356 are head domain (RuvB-H); the sequence is PVGFDLMDRK…RGEWDTPDGK (92 aa). DNA contacts are provided by Arg301, Arg320, and Arg325.

The protein belongs to the RuvB family. In terms of assembly, homohexamer. Forms an RuvA(8)-RuvB(12)-Holliday junction (HJ) complex. HJ DNA is sandwiched between 2 RuvA tetramers; dsDNA enters through RuvA and exits via RuvB. An RuvB hexamer assembles on each DNA strand where it exits the tetramer. Each RuvB hexamer is contacted by two RuvA subunits (via domain III) on 2 adjacent RuvB subunits; this complex drives branch migration. In the full resolvosome a probable DNA-RuvA(4)-RuvB(12)-RuvC(2) complex forms which resolves the HJ.

It is found in the cytoplasm. The enzyme catalyses ATP + H2O = ADP + phosphate + H(+). Its function is as follows. The RuvA-RuvB-RuvC complex processes Holliday junction (HJ) DNA during genetic recombination and DNA repair, while the RuvA-RuvB complex plays an important role in the rescue of blocked DNA replication forks via replication fork reversal (RFR). RuvA specifically binds to HJ cruciform DNA, conferring on it an open structure. The RuvB hexamer acts as an ATP-dependent pump, pulling dsDNA into and through the RuvAB complex. RuvB forms 2 homohexamers on either side of HJ DNA bound by 1 or 2 RuvA tetramers; 4 subunits per hexamer contact DNA at a time. Coordinated motions by a converter formed by DNA-disengaged RuvB subunits stimulates ATP hydrolysis and nucleotide exchange. Immobilization of the converter enables RuvB to convert the ATP-contained energy into a lever motion, pulling 2 nucleotides of DNA out of the RuvA tetramer per ATP hydrolyzed, thus driving DNA branch migration. The RuvB motors rotate together with the DNA substrate, which together with the progressing nucleotide cycle form the mechanistic basis for DNA recombination by continuous HJ branch migration. Branch migration allows RuvC to scan DNA until it finds its consensus sequence, where it cleaves and resolves cruciform DNA. This is Holliday junction branch migration complex subunit RuvB from Burkholderia lata (strain ATCC 17760 / DSM 23089 / LMG 22485 / NCIMB 9086 / R18194 / 383).